Consider the following 1198-residue polypeptide: Integrator complex subunit 2 (1198 aa).

A helical transmembrane segment spans residues 421-437 (FVSLSFCMLLAFSTLVS).

The protein belongs to the Integrator subunit 2 family. Component of the Integrator complex, composed of core subunits INTS1, INTS2, INTS3, INTS4, INTS5, INTS6, INTS7, INTS8, INTS9/RC74, INTS10, INTS11/CPSF3L, INTS12, INTS13, INTS14 and INTS15. The core complex associates with protein phosphatase 2A subunits PPP2CA and PPP2R1A, to form the Integrator-PP2A (INTAC) complex.

Its subcellular location is the nucleus. It localises to the nucleus membrane. It is found in the cytoplasm. In terms of biological role, component of the integrator complex, a multiprotein complex that terminates RNA polymerase II (Pol II) transcription in the promoter-proximal region of genes. The integrator complex provides a quality checkpoint during transcription elongation by driving premature transcription termination of transcripts that are unfavorably configured for transcriptional elongation: the complex terminates transcription by (1) catalyzing dephosphorylation of the C-terminal domain (CTD) of Pol II subunit POLR2A/RPB1 and SUPT5H/SPT5, (2) degrading the exiting nascent RNA transcript via endonuclease activity and (3) promoting the release of Pol II from bound DNA. The integrator complex is also involved in terminating the synthesis of non-coding Pol II transcripts, such as enhancer RNAs (eRNAs), small nuclear RNAs (snRNAs), telomerase RNAs and long non-coding RNAs (lncRNAs). Mediates recruitment of cytoplasmic dynein to the nuclear envelope, probably as component of the integrator complex. The chain is Integrator complex subunit 2 (Ints2) from Mus musculus (Mouse).